We begin with the raw amino-acid sequence, 241 residues long: Pyridoxine 5'-phosphate synthase (241 aa).

N7 serves as a coordination point for 3-amino-2-oxopropyl phosphate. 9 to 10 (DH) contacts 1-deoxy-D-xylulose 5-phosphate. R18 contributes to the 3-amino-2-oxopropyl phosphate binding site. H43 functions as the Proton acceptor in the catalytic mechanism. Residues R45 and H50 each contribute to the 1-deoxy-D-xylulose 5-phosphate site. E70 serves as the catalytic Proton acceptor. 1-deoxy-D-xylulose 5-phosphate is bound at residue T100. H191 (proton donor) is an active-site residue. Residues G192 and 213-214 (GH) contribute to the 3-amino-2-oxopropyl phosphate site.

The protein belongs to the PNP synthase family. In terms of assembly, homooctamer; tetramer of dimers.

The protein localises to the cytoplasm. The enzyme catalyses 3-amino-2-oxopropyl phosphate + 1-deoxy-D-xylulose 5-phosphate = pyridoxine 5'-phosphate + phosphate + 2 H2O + H(+). It participates in cofactor biosynthesis; pyridoxine 5'-phosphate biosynthesis; pyridoxine 5'-phosphate from D-erythrose 4-phosphate: step 5/5. Its function is as follows. Catalyzes the complicated ring closure reaction between the two acyclic compounds 1-deoxy-D-xylulose-5-phosphate (DXP) and 3-amino-2-oxopropyl phosphate (1-amino-acetone-3-phosphate or AAP) to form pyridoxine 5'-phosphate (PNP) and inorganic phosphate. The protein is Pyridoxine 5'-phosphate synthase of Solidesulfovibrio magneticus (strain ATCC 700980 / DSM 13731 / RS-1) (Desulfovibrio magneticus).